The following is a 576-amino-acid chain: Kinetochore-associated protein DSN1 (576 aa).

Residues 1-11 (MSLEPTQTVSG) are compositionally biased toward polar residues. Disordered stretches follow at residues 1–22 (MSLE…RTHK), 35–64 (LESD…NKQS), 185–205 (YSQP…ISSS), and 227–246 (QPHY…SQRG). Positions 235–246 (RERKKSIGSQRG) are enriched in basic residues. At Ser-250 the chain carries Phosphoserine. A disordered region spans residues 412–437 (RSRRKFSERRKALPKEPKKLLPNSKN). The segment covering 420-430 (RRKALPKEPKK) has biased composition (basic and acidic residues).

Component of the MIND kinetochore complex, which is composed of at least MTW1, NNF1, NSL1 and DSN1. Interacts with NSL1.

The protein localises to the nucleus. The protein resides in the chromosome. Its subcellular location is the centromere. It localises to the kinetochore. In terms of biological role, acts as an essential component of the kinetochore MIND complex, which is required for the spindle checkpoint and kinetochore integrity. MIND plays a role in establishing a bipolar spindle-kinetochore interaction by joining kinetochore subunits contacting DNA to those contacting microtubules. This is Kinetochore-associated protein DSN1 (DSN1) from Saccharomyces cerevisiae (strain ATCC 204508 / S288c) (Baker's yeast).